Consider the following 257-residue polypeptide: MKDTSLALHFVSSGTKESLSAQKDLVERYGHVAAEDADIIVALGGDGTMLQALRDFMNTGKPIYGMNRGSVGFLMNEFVIENLPERILAAQMETIRPLVMVAETDDAPPVEALAINEVSLFRQSYQAARIRITIDGKVRLQELVCDGVMVATPAGSTAYNLSAQGPILPLEAPLLALTPVSPFRPRRWGGALLPKHVTVRMDLLETEKRPVNAVADNNEVKSVTSVTVREAPNSQVTILFDKNHSWDERILTEQFRH.

Residue aspartate 46 is the Proton acceptor of the active site. NAD(+) contacts are provided by residues 46 to 47 (DG), 116 to 117 (NE), aspartate 146, alanine 154, 157 to 162 (TAYNLS), and asparagine 218.

This sequence belongs to the NAD kinase family. Requires a divalent metal cation as cofactor.

Its subcellular location is the cytoplasm. The enzyme catalyses NAD(+) + ATP = ADP + NADP(+) + H(+). Functionally, involved in the regulation of the intracellular balance of NAD and NADP, and is a key enzyme in the biosynthesis of NADP. Catalyzes specifically the phosphorylation on 2'-hydroxyl of the adenosine moiety of NAD to yield NADP. In Brucella melitensis biotype 1 (strain ATCC 23456 / CCUG 17765 / NCTC 10094 / 16M), this protein is NAD kinase.